Consider the following 308-residue polypeptide: Coenzyme PQQ synthesis protein B (308 aa).

This sequence belongs to the PqqB family.

Its pathway is cofactor biosynthesis; pyrroloquinoline quinone biosynthesis. In terms of biological role, may be involved in the transport of PQQ or its precursor to the periplasm. The sequence is that of Coenzyme PQQ synthesis protein B from Rhodopseudomonas palustris (strain BisB5).